The sequence spans 393 residues: Lysine/ornithine decarboxylase (393 aa).

Lysine 51 carries the post-translational modification N6-(pyridoxal phosphate)lysine. Residue cysteine 323 is the Proton donor; shared with dimeric partner of the active site.

This sequence belongs to the Orn/Lys/Arg decarboxylase class-II family. Homodimer. Pyridoxal 5'-phosphate is required as a cofactor.

It carries out the reaction L-lysine + H(+) = cadaverine + CO2. The enzyme catalyses L-ornithine + H(+) = putrescine + CO2. The protein operates within amine and polyamine biosynthesis; putrescine biosynthesis via L-ornithine pathway; putrescine from L-ornithine: step 1/1. With respect to regulation, inhibited competitively by both alpha-difluoromethyllysine and alpha-difluoromethylornithine. Functionally, decarboxylates both L-lysine and L-ornithine with similar catalytic efficiency. The sequence is that of Lysine/ornithine decarboxylase (ldc) from Selenomonas ruminantium.